The sequence spans 306 residues: Tyrosine recombinase XerC (306 aa).

Residues 2–81 (AKASAAIEEF…ALRQFYGFLV (80 aa)) form the Core-binding (CB) domain. Residues 102-283 (PLPKTLSHKE…DAARLVALVN (182 aa)) enclose the Tyr recombinase domain. Catalysis depends on residues arginine 146, lysine 170, histidine 235, arginine 238, and histidine 261. Catalysis depends on tyrosine 270, which acts as the O-(3'-phospho-DNA)-tyrosine intermediate.

Belongs to the 'phage' integrase family. XerC subfamily. Forms a cyclic heterotetrameric complex composed of two molecules of XerC and two molecules of XerD.

It localises to the cytoplasm. In terms of biological role, site-specific tyrosine recombinase, which acts by catalyzing the cutting and rejoining of the recombining DNA molecules. The XerC-XerD complex is essential to convert dimers of the bacterial chromosome into monomers to permit their segregation at cell division. It also contributes to the segregational stability of plasmids. The sequence is that of Tyrosine recombinase XerC from Erythrobacter litoralis (strain HTCC2594).